Reading from the N-terminus, the 1678-residue chain is Serine/threonine-protein kinase pakD (1678 aa).

The span at 1 to 15 shows a compositional bias: low complexity; the sequence is MSRLQPQQQQRGRSS. 4 disordered regions span residues 1 to 73, 180 to 224, 262 to 428, and 442 to 489; these read MSRL…NNKF, NSNS…PNKN, QLSS…NNNN, and KRKS…SQSS. Residues 17-34 are compositionally biased toward polar residues; it reads FKDNFQIQKPLQSLTPSE. 2 stretches are compositionally biased toward low complexity: residues 35-73 and 180-214; these read QQQQQQQQQQQQQQQQQQQQQQQQQNNANNNNNNNNNKF and NSNSSKTTTNNNNNNNNNNNNNNNNNNNNNNNNNN. Positions 82 to 189 constitute a Calponin-homology (CH) domain; that stretch reads KNVENDIKKW…NSNSSKTTTN (108 aa). Polar residues predominate over residues 215–224; that stretch reads RAIITSPNKN. Composition is skewed to low complexity over residues 276–359 and 399–428; these read NNNN…NINN and NNNNNNNNNNNNNNNNNNNNNNNNNNNNNN. The segment covering 460–472 has biased composition (acidic residues); it reads DSSDSSDSSDSDS. 2 coiled-coil regions span residues 512–542 and 570–628; these read KQDKTITSQKQTIETLEKDLEFQKQLTKKLL and TRQI…YANT. Low complexity-rich tracts occupy residues 631–654, 662–671, and 695–713; these read SSNSNGNNNSNNNSLGCNNSINGS, NSSTSKGTLS, and NSHQQQQQQNQLSQSQTTS. Disordered regions lie at residues 631–672 and 693–722; these read SSNS…TLSR and PVNSHQQQQQQNQLSQSQTTSPKNTSASYN. Residues 752–862 adopt a coiled-coil conformation; that stretch reads VSATLQQKQQ…QNQQINNLID (111 aa). Residues 1141 to 1197 form a Phorbol-ester/DAG-type zinc finger; that stretch reads PHSFVLKSFRIISECNYCRQYIWGVRGIVAREAFECVGCKYKTHKKCLKEASEKTFC. The CRIB domain maps to 1202–1215; that stretch reads VGAPFNVKHEMHVG. Disordered stretches follow at residues 1267–1292 and 1323–1346; these read LTNNSNNNNNNNNSNNNLQQQQQQNQ and NNTYNNNNNNNNNNEINPSSPNNN. Residues 1269–1309 adopt a coiled-coil conformation; sequence NNSNNNNNNNNSNNNLQQQQQQNQQLKQKLNITNNQQNNTI. The region spanning 1376–1647 is the Protein kinase domain; the sequence is YKVREVVGGG…AHYLLRHPFL (272 aa). Residues 1382 to 1390 and lysine 1405 each bind ATP; that span reads VGGGSTGKV. Aspartate 1515 acts as the Proton acceptor in catalysis.

It belongs to the protein kinase superfamily. STE Ser/Thr protein kinase family. STE20 subfamily. Mg(2+) is required as a cofactor.

The catalysed reaction is L-seryl-[protein] + ATP = O-phospho-L-seryl-[protein] + ADP + H(+). It carries out the reaction L-threonyl-[protein] + ATP = O-phospho-L-threonyl-[protein] + ADP + H(+). This chain is Serine/threonine-protein kinase pakD, found in Dictyostelium discoideum (Social amoeba).